Reading from the N-terminus, the 396-residue chain is Phosphoglycerate kinase (396 aa).

Substrate contacts are provided by residues 21–23 (DLN), Arg36, 59–62 (HFGR), Arg118, and Arg151. Residues Lys201, Glu323, and 353–356 (GGDT) contribute to the ATP site.

It belongs to the phosphoglycerate kinase family. As to quaternary structure, monomer.

It localises to the cytoplasm. It carries out the reaction (2R)-3-phosphoglycerate + ATP = (2R)-3-phospho-glyceroyl phosphate + ADP. Its pathway is carbohydrate degradation; glycolysis; pyruvate from D-glyceraldehyde 3-phosphate: step 2/5. The protein is Phosphoglycerate kinase of Rhodospirillum centenum (strain ATCC 51521 / SW).